The primary structure comprises 541 residues: Malate synthase (541 aa).

Arg-172 functions as the Proton acceptor in the catalytic mechanism. Catalysis depends on Asp-452, which acts as the Proton donor.

The protein belongs to the malate synthase family.

The protein localises to the cytoplasm. It catalyses the reaction glyoxylate + acetyl-CoA + H2O = (S)-malate + CoA + H(+). It functions in the pathway carbohydrate metabolism; glyoxylate cycle; (S)-malate from isocitrate: step 2/2. This Myxococcus xanthus (strain DK1622) protein is Malate synthase (mls).